We begin with the raw amino-acid sequence, 226 residues long: Ribose-5-phosphate isomerase A (226 aa).

Substrate-binding positions include 33-36 (TGST), 86-89 (DGAD), and 99-102 (KGGG). Residue Glu-108 is the Proton acceptor of the active site. Residue Lys-126 coordinates substrate.

It belongs to the ribose 5-phosphate isomerase family. Homodimer.

The enzyme catalyses aldehydo-D-ribose 5-phosphate = D-ribulose 5-phosphate. It participates in carbohydrate degradation; pentose phosphate pathway; D-ribose 5-phosphate from D-ribulose 5-phosphate (non-oxidative stage): step 1/1. Catalyzes the reversible conversion of ribose-5-phosphate to ribulose 5-phosphate. The polypeptide is Ribose-5-phosphate isomerase A (Bordetella parapertussis (strain 12822 / ATCC BAA-587 / NCTC 13253)).